The following is a 1041-amino-acid chain: DNA polymerase catalytic subunit (1041 aa).

The tract at residues 1–23 is disordered; that stretch reads MAFFNPYFKSKNKGSDMPPKQSM.

This sequence belongs to the DNA polymerase type-B family.

The protein resides in the host nucleus. It carries out the reaction DNA(n) + a 2'-deoxyribonucleoside 5'-triphosphate = DNA(n+1) + diphosphate. The enzyme catalyses Endonucleolytic cleavage to 5'-phosphomonoester.. Functionally, replicates viral genomic DNA. The replication complex is composed of six viral proteins: the DNA polymerase, processivity factor, primase, primase-associated factor, helicase, and ssDNA-binding protein. Additionally, the polymerase contains an intrinsic ribonuclease H (RNase H) activity that specifically degrades RNA/DNA heteroduplexes or duplex DNA substrates in the 5' to 3' direction. Therefore, it can catalyze the excision of the RNA primers that initiate the synthesis of Okazaki fragments at a replication fork during viral DNA replication. The sequence is that of DNA polymerase catalytic subunit from Elephantid herpesvirus 1 (isolate Asian elephant/Berlin/Kiba/1998) (EIHV-1).